A 396-amino-acid chain; its full sequence is Probable sugar efflux transporter (396 aa).

12 helical membrane-spanning segments follow: residues 15 to 35 (VLIMACAGFIFNTTEFVPVAM), 51 to 71 (GLMMTVYAWTVLIMSLPAMLA), 84 to 104 (LFIIFIVGHILSVIAWNFWIL), 109 to 129 (MCIALAHSVFWSITASLVMRI), 137 to 157 (QALGMLAIGTALATILGLPIG), 168 to 188 (VTFGIIAVLALSIMFLIIRLL), 209 to 229 (PLLLWLYVTTAIVISAHFTAY), 245 to 265 (NFATAVLLVFGFSGIAASLLF), 273 to 293 (PTKFIVVSMSLLMFSLLLLLF), 297 to 317 (TIIAMFSLVFIWGIGISCIGL), 333 to 353 (VATAIYSGIFNAGIGAGALFG), and 365 to 385 (IGYTGAALGLIGFIIFITTHL).

The protein belongs to the major facilitator superfamily. SotB (TC 2.A.1.2) family.

The protein resides in the cell inner membrane. Involved in the efflux of sugars. The physiological role may be the reduction of the intracellular concentration of toxic sugars or sugar metabolites. In Haemophilus influenzae (strain ATCC 51907 / DSM 11121 / KW20 / Rd), this protein is Probable sugar efflux transporter.